Consider the following 204-residue polypeptide: MSNQEKKMHEEELQQQETVEADTEAEAEAVGTDADIEWNEESALDETEAKIAQLEAALLSSEAKVKEQQDAVLRAKAEVENMRRRTEQEIDKARKFALNKFAEELLPIIDNLERAIQAADTESEVVQPILEGITLTHKTFIDTISKFGLKEINPEGEAFNPELHQAMSIQESADHESNTVMFVMQKGYELNGRVIRPAMVMVAK.

Positions 1–12 (MSNQEKKMHEEE) are enriched in basic and acidic residues. Positions 1 to 37 (MSNQEKKMHEEELQQQETVEADTEAEAEAVGTDADIE) are disordered.

It belongs to the GrpE family. Homodimer.

Its subcellular location is the cytoplasm. Participates actively in the response to hyperosmotic and heat shock by preventing the aggregation of stress-denatured proteins, in association with DnaK and GrpE. It is the nucleotide exchange factor for DnaK and may function as a thermosensor. Unfolded proteins bind initially to DnaJ; upon interaction with the DnaJ-bound protein, DnaK hydrolyzes its bound ATP, resulting in the formation of a stable complex. GrpE releases ADP from DnaK; ATP binding to DnaK triggers the release of the substrate protein, thus completing the reaction cycle. Several rounds of ATP-dependent interactions between DnaJ, DnaK and GrpE are required for fully efficient folding. The polypeptide is Protein GrpE (Vibrio proteolyticus (Aeromonas proteolytica)).